Reading from the N-terminus, the 473-residue chain is Bifunctional protein GlmU (473 aa).

The interval 1 to 240 is pyrophosphorylase; sequence MAIHPLDVVI…AAQVAGVNSP (240 aa). Residues Lys-25, Gln-83, 88 to 89, 110 to 112, Gly-147, Glu-165, and Asn-238 each bind UDP-N-acetyl-alpha-D-glucosamine; these read GT and SGD. Asp-112 contributes to the Mg(2+) binding site. Position 238 (Asn-238) interacts with Mg(2+). The interval 241-261 is linker; that stretch reads VQLAELERVYQQRLATTLMEQ. Residues 262 to 473 are N-acetyltransferase; it reads GVRLADPARL…WARPVKKPGV (212 aa). The UDP-N-acetyl-alpha-D-glucosamine site is built by Arg-348 and Lys-366. Residue His-378 is the Proton acceptor of the active site. UDP-N-acetyl-alpha-D-glucosamine contacts are provided by Tyr-381 and Asn-392. Acetyl-CoA is bound by residues Ala-395, 401-402, Ser-420, Gly-438, and Arg-455; that span reads NY.

This sequence in the N-terminal section; belongs to the N-acetylglucosamine-1-phosphate uridyltransferase family. In the C-terminal section; belongs to the transferase hexapeptide repeat family. In terms of assembly, homotrimer. The cofactor is Mg(2+).

The protein localises to the cytoplasm. It catalyses the reaction alpha-D-glucosamine 1-phosphate + acetyl-CoA = N-acetyl-alpha-D-glucosamine 1-phosphate + CoA + H(+). It carries out the reaction N-acetyl-alpha-D-glucosamine 1-phosphate + UTP + H(+) = UDP-N-acetyl-alpha-D-glucosamine + diphosphate. It functions in the pathway nucleotide-sugar biosynthesis; UDP-N-acetyl-alpha-D-glucosamine biosynthesis; N-acetyl-alpha-D-glucosamine 1-phosphate from alpha-D-glucosamine 6-phosphate (route II): step 2/2. The protein operates within nucleotide-sugar biosynthesis; UDP-N-acetyl-alpha-D-glucosamine biosynthesis; UDP-N-acetyl-alpha-D-glucosamine from N-acetyl-alpha-D-glucosamine 1-phosphate: step 1/1. It participates in bacterial outer membrane biogenesis; LPS lipid A biosynthesis. Its function is as follows. Catalyzes the last two sequential reactions in the de novo biosynthetic pathway for UDP-N-acetylglucosamine (UDP-GlcNAc). The C-terminal domain catalyzes the transfer of acetyl group from acetyl coenzyme A to glucosamine-1-phosphate (GlcN-1-P) to produce N-acetylglucosamine-1-phosphate (GlcNAc-1-P), which is converted into UDP-GlcNAc by the transfer of uridine 5-monophosphate (from uridine 5-triphosphate), a reaction catalyzed by the N-terminal domain. The chain is Bifunctional protein GlmU from Polaromonas naphthalenivorans (strain CJ2).